The following is a 131-amino-acid chain: Small ribosomal subunit protein eS8 (131 aa).

The tract at residues 1 to 38 (MKLGAYYKGGDLKKPSGGKKRKVRRTKKKALGGGPPQI) is disordered. A compositionally biased stretch (basic residues) spans 16–30 (SGGKKRKVRRTKKKA).

Belongs to the eukaryotic ribosomal protein eS8 family. Part of the 30S ribosomal subunit.

The sequence is that of Small ribosomal subunit protein eS8 from Pyrobaculum arsenaticum (strain DSM 13514 / JCM 11321 / PZ6).